A 389-amino-acid polypeptide reads, in one-letter code: Probable tRNA sulfurtransferase (389 aa).

A THUMP domain is found at 57–165; the sequence is DEALDRLSKI…EDETYIYHRV (109 aa). ATP-binding positions include 183–184, Lys-267, Gly-289, and Gln-298; that span reads LL.

Belongs to the ThiI family.

It is found in the cytoplasm. It carries out the reaction [ThiI sulfur-carrier protein]-S-sulfanyl-L-cysteine + a uridine in tRNA + 2 reduced [2Fe-2S]-[ferredoxin] + ATP + H(+) = [ThiI sulfur-carrier protein]-L-cysteine + a 4-thiouridine in tRNA + 2 oxidized [2Fe-2S]-[ferredoxin] + AMP + diphosphate. The catalysed reaction is [ThiS sulfur-carrier protein]-C-terminal Gly-Gly-AMP + S-sulfanyl-L-cysteinyl-[cysteine desulfurase] + AH2 = [ThiS sulfur-carrier protein]-C-terminal-Gly-aminoethanethioate + L-cysteinyl-[cysteine desulfurase] + A + AMP + 2 H(+). It functions in the pathway cofactor biosynthesis; thiamine diphosphate biosynthesis. Its function is as follows. Catalyzes the ATP-dependent transfer of a sulfur to tRNA to produce 4-thiouridine in position 8 of tRNAs, which functions as a near-UV photosensor. Also catalyzes the transfer of sulfur to the sulfur carrier protein ThiS, forming ThiS-thiocarboxylate. This is a step in the synthesis of thiazole, in the thiamine biosynthesis pathway. The sulfur is donated as persulfide by IscS. This chain is Probable tRNA sulfurtransferase, found in Methanothermobacter thermautotrophicus (strain ATCC 29096 / DSM 1053 / JCM 10044 / NBRC 100330 / Delta H) (Methanobacterium thermoautotrophicum).